We begin with the raw amino-acid sequence, 900 residues long: Alpha-actinin-3 (900 aa).

Met1 carries the N-acetylmethionine modification. Residues 1–26 (MMMVMQPEGLGAGEGPFSGGGGGEYM) are disordered. Residues 1-260 (MMMVMQPEGL…IMTYVSCFYH (260 aa)) are actin-binding. The segment covering 10 to 24 (LGAGEGPFSGGGGGE) has biased composition (gly residues). Calponin-homology (CH) domains lie at 44–148 (KQQR…LRFA) and 157–263 (TSAK…HAFA). Spectrin repeat units follow at residues 287–397 (KLME…WLLS), 407–512 (HLAE…ALER), 522–633 (QLQL…TLQE), and 643–746 (RLRR…EVEN). 2 consecutive EF-hand domains span residues 759–794 (EQLN…MGYD) and 795–830 (LGEV…ETAE). Positions 772, 776, 778, 783, 808, and 810 each coordinate Ca(2+).

It belongs to the alpha-actinin family. In terms of assembly, homodimer; antiparallel. Also forms heterodimers with ACTN2. Interacts with MYOZ1. In terms of tissue distribution, expression restricted to skeletal muscle fast (type 2) fibers (at protein level).

Its function is as follows. F-actin cross-linking protein which is thought to anchor actin to a variety of intracellular structures. This is a bundling protein. This Mus musculus (Mouse) protein is Alpha-actinin-3 (Actn3).